Consider the following 825-residue polypeptide: MGWLCSGLLFPVSCLVLLQVASSGNMKVLQEPTCVSDYMSISTCEWKMNGPTNCSTELRLLYQLVFLLSEAHTCIPENNGGAGCVCHLLMDDVVSADNYTLDLWAGQQLLWKGSFKPSEHVKPRAPGNLTVHTNVSDTLLLTWSNPYPPDNYLYNHLTYAVNIWSENDPADFRIYNVTYLEPSLRIAASTLKSGISYRARVRAWAQCYNTTWSEWSPSTKWHNSYREPFEQHLLLGVSVSCIVILAVCLLCYVSITKIKKEWWDQIPNPARSRLVAIIIQDAQGSQWEKRSRGQEPAKCPHWKNCLTKLLPCFLEHNMKRDEDPHKAAKEMPFQGSGKSAWCPVEISKTVLWPESISVVRCVELFEAPVECEEEEEVEEEKGSFCASPESSRDDFQEGREGIVARLTESLFLDLLGEENGGFCQQDMGESCLLPPSGSTSAHMPWDEFPSAGPKEAPPWGKEQPLHLEPSPPASPTQSPDNLTCTETPLVIAGNPAYRSFSNSLSQSPCPRELGPDPLLARHLEEVEPEMPCVPQLSEPTTVPQPEPETWEQILRRNVLQHGAAAAPVSAPTSGYQEFVHAVEQGGTQASAVVGLGPPGEAGYKAFSSLLASSAVSPEKCGFGASSGEEGYKPFQDLIPGCPGDPAPVPVPLFTFGLDREPPRSPQSSHLPSSSPEHLGLEPGEKVEDMPKPPLPQEQATDPLVDSLGSGIVYSALTCHLCGHLKQCHGQEDGGQTPVMASPCCGCCCGDRSSPPTTPLRAPDPSPGGVPLEASLCPASLAPSGISEKSKSSSSFHPAPGNAQSSSQTPKIVNFVSVGPTYMRVS.

The N-terminal stretch at 1–25 (MGWLCSGLLFPVSCLVLLQVASSGN) is a signal peptide. The Extracellular portion of the chain corresponds to 26 to 232 (MKVLQEPTCV…NSYREPFEQH (207 aa)). A disulfide bridge connects residues cysteine 34 and cysteine 44. A glycan (N-linked (GlcNAc...) asparagine) is linked at asparagine 53. An intrachain disulfide couples cysteine 74 to cysteine 86. Residues asparagine 98, asparagine 128, asparagine 134, asparagine 176, and asparagine 209 are each glycosylated (N-linked (GlcNAc...) asparagine). Positions 125-224 (APGNLTVHTN…WSPSTKWHNS (100 aa)) constitute a Fibronectin type-III domain. The WSXWS motif motif lies at 212–216 (WSEWS). The chain crosses the membrane as a helical span at residues 233-256 (LLLGVSVSCIVILAVCLLCYVSIT). The Cytoplasmic segment spans residues 257-825 (KIKKEWWDQI…SVGPTYMRVS (569 aa)). The Box 1 motif signature appears at 262-270 (WWDQIPNPA). Disordered stretches follow at residues 373 to 397 (EEEE…DFQE) and 433 to 485 (LPPS…LTCT). The interval 437–557 (GSTSAHMPWD…ETWEQILRRN (121 aa)) is required for IRS1 activation and IL4-induced cell growth. Positions 475–485 (PTQSPDNLTCT) are enriched in polar residues. Tyrosine 497, tyrosine 575, tyrosine 603, and tyrosine 631 each carry phosphotyrosine. Residues 558-657 (VLQHGAAAAP…VPVPLFTFGL (100 aa)) are required for IL4-induced gene expression. The disordered stretch occupies residues 651–703 (PLFTFGLDREPPRSPQSSHLPSSSPEHLGLEPGEKVEDMPKPPLPQEQATDPL). The span at 665 to 677 (PQSSHLPSSSPEH) shows a compositional bias: low complexity. The segment covering 678 to 690 (LGLEPGEKVEDMP) has biased composition (basic and acidic residues). Residues 711-716 (IVYSAL) carry the ITIM motif motif. The segment at 782–809 (PSGISEKSKSSSSFHPAPGNAQSSSQTP) is disordered.

Belongs to the type I cytokine receptor family. Type 4 subfamily. In terms of assembly, the functional IL4 receptor is formed by initial binding of IL4 to IL4R. Subsequent recruitment to the complex of the common gamma chain, in immune cells, creates a type I receptor and, in non-immune cells, of IL13RA1 forms a type II receptor. IL4R can also interact with the IL13/IL13RA1 complex to form a similar type II receptor. Interacts with PIK3C3. Interacts with the SH2-containing phosphatases, PTPN6/SHIP1, PTPN11/SHIP2 and INPP5D/SHIP. Interacts with JAK1 through a Box 1-containing region; inhibited by SOCS5. Interacts with SOCS5; inhibits IL4 signaling. Interacts with JAK3. Interacts with CLM1. Interacts with IL13RA2. On IL4 binding, phosphorylated on C-terminal tyrosine residues. Phosphorylation on any one of tyrosine residues, Tyr-575, Tyr-603 or Tyr-631, is required for STAT6-induced gene induction. Post-translationally, the soluble form (sIL4R/IL4BP) can also be produced by proteolytic cleavage at the cell surface (shedding) by a metalloproteinase. In terms of tissue distribution, isoform 1 and isoform 2 are highly expressed in activated T-cells.

It is found in the cell membrane. The protein resides in the secreted. Receptor for both interleukin 4 and interleukin 13. Couples to the JAK1/2/3-STAT6 pathway. The IL4 response is involved in promoting Th2 differentiation. The IL4/IL13 responses are involved in regulating IgE production and, chemokine and mucus production at sites of allergic inflammation. In certain cell types, can signal through activation of insulin receptor substrates, IRS1/IRS2. In terms of biological role, soluble IL4R (sIL4R) inhibits IL4-mediated cell proliferation and IL5 up-regulation by T-cells. The chain is Interleukin-4 receptor subunit alpha (IL4R) from Homo sapiens (Human).